The sequence spans 101 residues: MGIRYLLVLVLVLLVLGCEVQGAHMPQQDEATTSSLFTQMQESFYGYWGIAKSAAQGLYEKTYLTTMDEKIREIYNKSTAAVSTYAGIFTDQLLSMLKGDQ.

The first 22 residues, 1-22, serve as a signal peptide directing secretion; that stretch reads MGIRYLLVLVLVLLVLGCEVQG. Positions 66–74 are lipid binding; it reads TMDEKIREI. Residues 78–101 are lipoprotein lipase cofactor; the sequence is STAAVSTYAGIFTDQLLSMLKGDQ.

Belongs to the apolipoprotein C2 family. Post-translationally, proapolipoprotein C-II is synthesized as a sialic acid containing glycoprotein which is subsequently desialylated prior to its proteolytic processing. In terms of processing, proapolipoprotein C-II, the major form found in plasma undergoes proteolytic cleavage of its N-terminal hexapeptide to generate apolipoprotein C-II, which occurs as the minor form in plasma.

The protein localises to the secreted. In terms of biological role, component of chylomicrons, very low-density lipoproteins (VLDL), low-density lipoproteins (LDL), and high-density lipoproteins (HDL) in plasma. Plays an important role in lipoprotein metabolism as an activator of lipoprotein lipase. Both proapolipoprotein C-II and apolipoprotein C-II can activate lipoprotein lipase. The sequence is that of Apolipoprotein C-II (APOC2) from Leptonychotes weddellii (Weddell seal).